A 111-amino-acid chain; its full sequence is uncharacterized protein (111 aa).

The protein localises to the mitochondrion. This is an uncharacterized protein from Arabidopsis thaliana (Mouse-ear cress).